The primary structure comprises 946 residues: Ent-kaur-16-ene synthase (946 aa).

Mg(2+) is bound by residues Asp-656, Glu-660, Asn-839, Asp-840, Ser-843, and Asp-847. Residues 656-660 carry the DEXXE motif motif; it reads DEFFE.

This sequence belongs to the terpene synthase family. It depends on Mg(2+) as a cofactor.

The catalysed reaction is ent-copalyl diphosphate = ent-kaur-16-ene + diphosphate. It catalyses the reaction (2E,6E,10E)-geranylgeranyl diphosphate = ent-copalyl diphosphate. The protein operates within plant hormone biosynthesis; gibberellin biosynthesis. Functionally, catalyzes the conversion of geranylgeranyl diphosphate to the gibberellin precursor ent-kaurene diphosphate in a two step process. The chain is Ent-kaur-16-ene synthase from Phaeosphaeria sp. (strain L487).